We begin with the raw amino-acid sequence, 463 residues long: Asparagine--tRNA ligase (463 aa).

The protein belongs to the class-II aminoacyl-tRNA synthetase family. Homodimer.

The protein localises to the cytoplasm. It carries out the reaction tRNA(Asn) + L-asparagine + ATP = L-asparaginyl-tRNA(Asn) + AMP + diphosphate + H(+). The chain is Asparagine--tRNA ligase from Bacillus cytotoxicus (strain DSM 22905 / CIP 110041 / 391-98 / NVH 391-98).